Here is a 117-residue protein sequence, read N- to C-terminus: Large ribosomal subunit protein uL18 (117 aa).

The protein belongs to the universal ribosomal protein uL18 family. In terms of assembly, part of the 50S ribosomal subunit; part of the 5S rRNA/L5/L18/L25 subcomplex. Contacts the 5S and 23S rRNAs.

This is one of the proteins that bind and probably mediate the attachment of the 5S RNA into the large ribosomal subunit, where it forms part of the central protuberance. The polypeptide is Large ribosomal subunit protein uL18 (Methylobacillus flagellatus (strain ATCC 51484 / DSM 6875 / VKM B-1610 / KT)).